Here is a 216-residue protein sequence, read N- to C-terminus: Snake venom metalloproteinase HT-1 (216 aa).

A Disintegrin domain is found at Pro8–Asn94. Positions 10, 13, 15, 17, 20, and 23 each coordinate Ca(2+). Intrachain disulfides connect Cys11/Cys40, Cys22/Cys35, Cys24/Cys30, Cys34/Cys57, Cys48/Cys54, Cys53/Cys79, Cys66/Cys86, Cys73/Cys105, Cys98/Cys110, Cys117/Cys167, Cys132/Cys178, Cys145/Cys155, Cys162/Cys204, and Cys198/Cys209. The short motif at Glu72 to Asp74 is the D/ECD-tripeptide element. Asn175 carries N-linked (GlcNAc...) asparagine glycosylation.

Belongs to the venom metalloproteinase (M12B) family. P-III subfamily. P-IIIa sub-subfamily. In terms of assembly, monomer. It depends on Zn(2+) as a cofactor. In terms of tissue distribution, expressed by the venom gland.

It localises to the secreted. Its function is as follows. Zinc protease from snake venom that induces hemorrhage. This chain is Snake venom metalloproteinase HT-1, found in Crotalus ruber ruber (Red diamond rattlesnake).